The primary structure comprises 376 residues: Lipid-A-disaccharide synthase (376 aa).

This sequence belongs to the LpxB family.

It catalyses the reaction a lipid X + a UDP-2-N,3-O-bis[(3R)-3-hydroxyacyl]-alpha-D-glucosamine = a lipid A disaccharide + UDP + H(+). It participates in bacterial outer membrane biogenesis; LPS lipid A biosynthesis. Functionally, condensation of UDP-2,3-diacylglucosamine and 2,3-diacylglucosamine-1-phosphate to form lipid A disaccharide, a precursor of lipid A, a phosphorylated glycolipid that anchors the lipopolysaccharide to the outer membrane of the cell. The polypeptide is Lipid-A-disaccharide synthase (Coxiella burnetii (strain CbuG_Q212) (Coxiella burnetii (strain Q212))).